A 297-amino-acid polypeptide reads, in one-letter code: 2,3,4,5-tetrahydropyridine-2,6-dicarboxylate N-succinyltransferase (297 aa).

Mg(2+) is bound by residues Asp148 and Glu165. Glu181 acts as the Acyl-anhydride intermediate in catalysis. Residues Arg183, Gly198, Ser201, Ala224, 239–240 (EA), Gly247, Lys258, and 271–274 (RRDS) contribute to the succinyl-CoA site.

The protein belongs to the type 2 tetrahydrodipicolinate N-succinyltransferase family. As to quaternary structure, homotrimer.

The protein resides in the cytoplasm. The enzyme catalyses (S)-2,3,4,5-tetrahydrodipicolinate + succinyl-CoA + H2O = (S)-2-succinylamino-6-oxoheptanedioate + CoA. It participates in amino-acid biosynthesis; L-lysine biosynthesis via DAP pathway; LL-2,6-diaminopimelate from (S)-tetrahydrodipicolinate (succinylase route): step 1/3. Functionally, catalyzes the conversion of the cyclic tetrahydrodipicolinate (THDP) into the acyclic N-succinyl-L-2-amino-6-oxopimelate using succinyl-CoA. The chain is 2,3,4,5-tetrahydropyridine-2,6-dicarboxylate N-succinyltransferase from Corynebacterium glutamicum (strain ATCC 13032 / DSM 20300 / JCM 1318 / BCRC 11384 / CCUG 27702 / LMG 3730 / NBRC 12168 / NCIMB 10025 / NRRL B-2784 / 534).